Consider the following 302-residue polypeptide: Putative S-adenosyl-L-methionine-dependent methyltransferase MMAR_1068 (302 aa).

Residues D127 and 156–157 (DL) contribute to the S-adenosyl-L-methionine site.

The protein belongs to the UPF0677 family.

Functionally, exhibits S-adenosyl-L-methionine-dependent methyltransferase activity. The protein is Putative S-adenosyl-L-methionine-dependent methyltransferase MMAR_1068 of Mycobacterium marinum (strain ATCC BAA-535 / M).